Consider the following 993-residue polypeptide: Muscular LMNA-interacting protein (993 aa).

Positions 1–51 are interaction with LMNA; that stretch reads MLSEQGLLSDCGNNYFQMTSCILSGSIQTTPQVSAGGSEAKPLIFTFVPTV. The segment at 71-90 is disordered; it reads PEESSDKSPETVNRSKSNDY. Polar residues predominate over residues 80 to 90; it reads ETVNRSKSNDY. Ser-146 bears the Phosphoserine mark. Disordered stretches follow at residues 152-171, 186-225, 231-250, 300-322, 334-358, 443-481, 500-582, 677-711, and 811-864; these read AASR…AAVR, VRPK…TSEQ, PAFS…PVNL, PHST…KPGL, SHVL…SLKS, SPAS…QGEL, TPLS…IHTY, SALH…TPSL, and LSMH…SQLT. Residues 161 to 837 form a required for interaction with ISL1 region; it reads PPGGIGTAAV…GSDTVKTPTT (677 aa). Over residues 212 to 225 the composition is skewed to polar residues; the sequence is KHGQLTSSPTTSEQ. Positions 300–315 are enriched in polar residues; the sequence is PHSTQLSGSNLPSSTA. The span at 343 to 358 shows a compositional bias: low complexity; that stretch reads PRTSSSPPSSSASLKS. The segment covering 500 to 532 has biased composition (polar residues); that stretch reads TPLSQAPSLSPTKQASSSLASMNVERTPSPTLK. The span at 533–563 shows a compositional bias: low complexity; the sequence is SNTMLSLLQTSTSSSVGLPPVPPSSSLSSLK. A compositionally biased stretch (basic and acidic residues) spans 564 to 574; sequence SKQDGDLRGPE. Residues 695 to 711 are compositionally biased toward polar residues; the sequence is SESTTPNHRSPVSTPSL. Low complexity predominate over residues 811 to 822; that stretch reads LSMHSSDSPSRS. At Ser-818 the chain carries Phosphoserine. Residues 849-864 show a composition bias toward polar residues; that stretch reads ANLSSPSSTVSESQLT.

As to quaternary structure, directly interacts with LMNA. Interacts with ISL1 (via N-terminal domain); the interaction represses ISL1 transactivator activity. Interactions of ISL1 with MLIP1 and GCN5/KAT2A may be mutually exclusive. In terms of tissue distribution, predominantly expressed in the heart and skeletal muscle. Also detected in liver. Expressed in skeletal muscle.

The protein localises to the nucleus. The protein resides in the nucleus envelope. It localises to the PML body. Its subcellular location is the cytoplasm. It is found in the cytosol. The protein localises to the cell membrane. The protein resides in the sarcolemma. Its function is as follows. Required for myoblast differentiation into myotubes, possibly acting as a transcriptional regulator of the myogenic program. Required for cardiac adaptation to stress through integrated regulation of the AKT/mTOR pathways and FOXO1. Regulates cardiac homeostasis and plays a role in the protection against cardiac hypertrophy. Binds chromatin. May act as a transcriptional cofactor for ISL1, repressing its transcriptional activity. May also repress MYOCD transcriptional activity. This Homo sapiens (Human) protein is Muscular LMNA-interacting protein.